Consider the following 475-residue polypeptide: Ribulose bisphosphate carboxylase large chain (475 aa).

Positions 1-2 (MS) are excised as a propeptide. P3 is modified (N-acetylproline). An N6,N6,N6-trimethyllysine modification is found at K14. The substrate site is built by N123 and T173. K175 functions as the Proton acceptor in the catalytic mechanism. K177 serves as a coordination point for substrate. Mg(2+) contacts are provided by K201, D203, and E204. At K201 the chain carries N6-carboxylysine. H294 functions as the Proton acceptor in the catalytic mechanism. Positions 295, 327, and 379 each coordinate substrate.

The protein belongs to the RuBisCO large chain family. Type I subfamily. Heterohexadecamer of 8 large chains and 8 small chains. It depends on Mg(2+) as a cofactor.

Its subcellular location is the plastid. It is found in the chloroplast. It carries out the reaction 2 (2R)-3-phosphoglycerate + 2 H(+) = D-ribulose 1,5-bisphosphate + CO2 + H2O. The enzyme catalyses D-ribulose 1,5-bisphosphate + O2 = 2-phosphoglycolate + (2R)-3-phosphoglycerate + 2 H(+). Its function is as follows. RuBisCO catalyzes two reactions: the carboxylation of D-ribulose 1,5-bisphosphate, the primary event in carbon dioxide fixation, as well as the oxidative fragmentation of the pentose substrate in the photorespiration process. Both reactions occur simultaneously and in competition at the same active site. The sequence is that of Ribulose bisphosphate carboxylase large chain from Nymphaea alba (White water-lily).